Reading from the N-terminus, the 520-residue chain is Anthranilate synthase component 1 (520 aa).

L-tryptophan contacts are provided by residues serine 40, lysine 50, and 291-293 (PYM). Residue 328–329 (GT) coordinates chorismate. Residue glutamate 361 coordinates Mg(2+). Residues tyrosine 449, arginine 469, 483–485 (GAG), and glycine 485 contribute to the chorismate site. Residue glutamate 498 participates in Mg(2+) binding.

It belongs to the anthranilate synthase component I family. As to quaternary structure, homodimer. In fact, exists in a monomer-dimer equilibrium in solution, shifted spontaneously in favor of the dimer; the monomer has a reduced activity compared with the dimer. Heterotetramer consisting of two non-identical subunits: a beta subunit (TrpG) and a large alpha subunit (TrpE) (Potential). Requires Mg(2+) as cofactor.

The enzyme catalyses chorismate + L-glutamine = anthranilate + pyruvate + L-glutamate + H(+). The protein operates within amino-acid biosynthesis; L-tryptophan biosynthesis; L-tryptophan from chorismate: step 1/5. Cooperatively feedback inhibited by tryptophan. Its function is as follows. Part of a heterotetrameric complex that catalyzes the two-step biosynthesis of anthranilate, an intermediate in the biosynthesis of L-tryptophan. In the first step, the glutamine-binding beta subunit (TrpG) of anthranilate synthase (AS) provides the glutamine amidotransferase activity which generates ammonia as a substrate that, along with chorismate, is used in the second step, catalyzed by the large alpha subunit of AS (TrpE) to produce anthranilate. In the absence of TrpG, TrpE can synthesize anthranilate directly from chorismate and high concentrations of ammonia. This is Anthranilate synthase component 1 (trpE) from Salmonella typhimurium (strain LT2 / SGSC1412 / ATCC 700720).